Here is a 241-residue protein sequence, read N- to C-terminus: Probable transcriptional regulator PhnF (241 aa).

One can recognise an HTH gntR-type domain in the interval 11–78; the sequence is PTRYQEIAAK…QGVGVLVLMR (68 aa). Positions 38–57 form a DNA-binding region, H-T-H motif; sequence EQQLAARFEVNRHTLRRAID.

Functionally, belongs to an operon involved in alkylphosphonate uptake and C-P lyase. Exact function not known. By similarity could be a transcriptional regulator. The protein is Probable transcriptional regulator PhnF (phnF) of Escherichia coli (strain K12).